We begin with the raw amino-acid sequence, 33 residues long: Dermaseptin-J7 (33 aa).

Val33 is subject to Valine amide.

Expressed by the skin glands.

The protein localises to the secreted. Its function is as follows. Has antimicrobial activity. This chain is Dermaseptin-J7, found in Phasmahyla jandaia (Jandaia leaf frog).